The sequence spans 30 residues: Conopeptide Vi002 (30 aa).

In terms of tissue distribution, expressed by the venom gland.

It is found in the secreted. This is Conopeptide Vi002 from Conus virgo (Virgin cone).